Reading from the N-terminus, the 333-residue chain is Electron transfer flavoprotein subunit alpha, mitochondrial (333 aa).

Residues 1 to 19 (MFRAAAPGQLRRAASLLRF) constitute a mitochondrion transit peptide. Residues 20 to 204 (QSTLVIAEHA…EISEWLDQKL (185 aa)) are domain I. Lys59 carries the post-translational modification N6-acetyllysine; alternate. N6-succinyllysine; alternate is present on Lys59. Lys62 is modified (N6-acetyllysine). An N6-acetyllysine; alternate modification is found at Lys69. Lys69 bears the N6-succinyllysine; alternate mark. Lys75 carries the N6-acetyllysine modification. Lys85 is subject to N6-acetyllysine; alternate. N6-succinyllysine; alternate is present on Lys85. The residue at position 93 (Thr93) is a Phosphothreonine. N6-acetyllysine occurs at positions 101 and 139. Ser140 carries the post-translational modification Phosphoserine. The residue at position 158 (Lys158) is an N6-acetyllysine; alternate. The residue at position 158 (Lys158) is an N6-succinyllysine; alternate. At Lys164 the chain carries N6-acetyllysine. An N6-succinyllysine modification is found at Lys187. At Lys203 the chain carries N6-acetyllysine; alternate. Lys203 is subject to N6-succinyllysine; alternate. Positions 205 to 333 (TKSDRPELTG…PEMTEILKKK (129 aa)) are domain II. Lys216 bears the N6-succinyllysine mark. FAD is bound at residue Arg223. Lys226 and Lys232 each carry N6-acetyllysine; alternate. 2 positions are modified to N6-succinyllysine; alternate: Lys226 and Lys232. Residues Ser248, 263-266 (VGQT), 281-286 (SGAIQH), and Asn300 each bind FAD. An N6-succinyllysine modification is found at Lys301. An FAD-binding site is contributed by 318-319 (DL).

This sequence belongs to the ETF alpha-subunit/FixB family. In terms of assembly, heterodimer composed of ETFA and ETFB. Identified in a complex that contains ETFA, ETFB and ETFRF1. Interaction with ETFRF1 promotes dissociation of the bound FAD and loss of electron transfer activity. Interacts with TASOR. It depends on FAD as a cofactor. The N-terminus is blocked.

The protein localises to the mitochondrion matrix. In terms of biological role, heterodimeric electron transfer flavoprotein that accepts electrons from several mitochondrial dehydrogenases, including acyl-CoA dehydrogenases, glutaryl-CoA and sarcosine dehydrogenase. It transfers the electrons to the main mitochondrial respiratory chain via ETF-ubiquinone oxidoreductase (ETF dehydrogenase). Required for normal mitochondrial fatty acid oxidation and normal amino acid metabolism. The sequence is that of Electron transfer flavoprotein subunit alpha, mitochondrial (ETFA) from Homo sapiens (Human).